A 180-amino-acid polypeptide reads, in one-letter code: Putative manganese efflux pump MntP (180 aa).

The next 5 helical transmembrane spans lie at 6 to 26, 33 to 53, 63 to 83, 101 to 121, and 130 to 150; these read VLLL…GLGL, MAWM…VAGW, VGRW…VKMV, GFLG…SVGF, and LLLT…AAFV.

Belongs to the MntP (TC 9.B.29) family.

The protein resides in the cell membrane. Functionally, probably functions as a manganese efflux pump. The sequence is that of Putative manganese efflux pump MntP from Desulforudis audaxviator (strain MP104C).